The chain runs to 214 residues: Probable transaldolase 1 (214 aa).

Catalysis depends on K83, which acts as the Schiff-base intermediate with substrate.

Belongs to the transaldolase family. Type 3B subfamily.

Its subcellular location is the cytoplasm. It catalyses the reaction D-sedoheptulose 7-phosphate + D-glyceraldehyde 3-phosphate = D-erythrose 4-phosphate + beta-D-fructose 6-phosphate. It participates in carbohydrate degradation; pentose phosphate pathway; D-glyceraldehyde 3-phosphate and beta-D-fructose 6-phosphate from D-ribose 5-phosphate and D-xylulose 5-phosphate (non-oxidative stage): step 2/3. Functionally, transaldolase is important for the balance of metabolites in the pentose-phosphate pathway. The protein is Probable transaldolase 1 of Listeria monocytogenes serotype 4b (strain F2365).